The primary structure comprises 335 residues: MFKPTRVLKSSQPILNSLPHAETVKMAYDLHLPKKTLHQNMNITSDEPIVFVHGIFGSKKSYATDSKLIANGTHSPVYTIDLRNHGETGHAQPFNYDTLVQDIKEFCSTHNLSNIKLVGYSLGAKVSMLAALRLPELVKSAVIIDNAPIKQPYIESYMKQYIKSMLHVDDAKISTTDKDWKRKASEAMKRYMPNATVRKNLLVNLVNKKPEGFESPAIDFENGNIQFLNPIKHMEEMAVKDVSDWPVESTEGLKFDGPVKFIRGLKSPFISPEGFKKINEHFPKNEFYDVNSAHDILDQRPSEYVKVICDFFNLQRYNSAPAHTVLGHKAPEMRV.

Residues 48–300 (PIVFVHGIFG…NSAHDILDQR (253 aa)) enclose the AB hydrolase-1 domain. Residues S121, D145, and H294 each act as charge relay system in the active site.

It belongs to the AB hydrolase superfamily.

Its subcellular location is the mitochondrion. The catalysed reaction is ethanol + acetyl-CoA = ethyl acetate + CoA. It catalyses the reaction acetyl-CoA + H2O = acetate + CoA + H(+). The enzyme catalyses ethyl acetate + H2O = ethanol + acetate + H(+). Alcohol acetyltransferase that catalyzes the synthesis of ethyl acetate from ethanol and acetyl-CoA. Can also function as a thioesterase by hydrolyzing acetyl-CoA in the absence of ethanol, as well as esterase hydrolyzing ethyl acetate. The protein is Ethanol acetyltransferase 1 (EAT1) of Cyberlindnera fabianii (Yeast).